Reading from the N-terminus, the 325-residue chain is ATP phosphoribosyltransferase (325 aa).

This sequence belongs to the ATP phosphoribosyltransferase family. Long subfamily. Requires Mg(2+) as cofactor.

The protein localises to the cytoplasm. The catalysed reaction is 1-(5-phospho-beta-D-ribosyl)-ATP + diphosphate = 5-phospho-alpha-D-ribose 1-diphosphate + ATP. The protein operates within amino-acid biosynthesis; L-histidine biosynthesis; L-histidine from 5-phospho-alpha-D-ribose 1-diphosphate: step 1/9. With respect to regulation, feedback inhibited by histidine. Its function is as follows. Catalyzes the condensation of ATP and 5-phosphoribose 1-diphosphate to form N'-(5'-phosphoribosyl)-ATP (PR-ATP). Has a crucial role in the pathway because the rate of histidine biosynthesis seems to be controlled primarily by regulation of HisG enzymatic activity. The sequence is that of ATP phosphoribosyltransferase from Nitrobacter winogradskyi (strain ATCC 25391 / DSM 10237 / CIP 104748 / NCIMB 11846 / Nb-255).